Reading from the N-terminus, the 248-residue chain is Putative transposase YncI (248 aa).

Belongs to the transposase 11 family.

This is Putative transposase YncI (yncI) from Escherichia coli (strain K12).